Consider the following 396-residue polypeptide: MGKNQPGYFGEFGGRYAPEILTEALEELESTYQKLKKSKKFKKELEFYLQNYVGRPSPLTYAERLTKQWGGARIWLKREDLNHTGAHKINNAIGQALIAKFMGKKRIIAETGAGQHGLATATVGAMFGMETVVYMGAVDVERQNLNAKKIEMLGAKILPVTAGEATLKEATSEAMRDWALNVSTTHYIVGSAIGPHPFPTIVRDLQSIIGKEARSQFKKRNHNLPHAIVACVGGGSNAIGMFHAFLKDKHVAIYGAEAGGLGPKPGEHSATLTYGKTGFLHGTKTLIIQDEAGQIVPAHSVSAGLDYPGVGPEHAYLSQTKRVDYRMVTDEQALDCFLEVTRVEGIIPALETAHAFYVARDVAKDLGKKKDLIICLSGRGDKDVTEVLRILGERSK.

At K88 the chain carries N6-(pyridoxal phosphate)lysine.

It belongs to the TrpB family. Tetramer of two alpha and two beta chains. It depends on pyridoxal 5'-phosphate as a cofactor.

It catalyses the reaction (1S,2R)-1-C-(indol-3-yl)glycerol 3-phosphate + L-serine = D-glyceraldehyde 3-phosphate + L-tryptophan + H2O. The protein operates within amino-acid biosynthesis; L-tryptophan biosynthesis; L-tryptophan from chorismate: step 5/5. In terms of biological role, the beta subunit is responsible for the synthesis of L-tryptophan from indole and L-serine. This is Tryptophan synthase beta chain from Leptospira biflexa serovar Patoc (strain Patoc 1 / Ames).